A 415-amino-acid chain; its full sequence is Dibenzothiophene monooxygenase (415 aa).

FMN-binding positions include tyrosine 94, 127–132, 157–161, arginine 280, 365–366, and threonine 387; these read NASSEN, KHFSS, and IG. Residues 129–140 form a lid loop region; it reads SSENNSHILDWK.

Belongs to the DszC flavin monooxygenase family. In terms of assembly, homotetramer.

The protein resides in the cytoplasm. It carries out the reaction dibenzothiophene + 2 FMNH2 + 2 O2 = dibenzothiophene 5,5-dioxide + 2 FMN + 2 H2O + 2 H(+). The catalysed reaction is dibenzothiophene + FMNH2 + O2 = dibenzothiophene 5-oxide + FMN + H2O + H(+). The enzyme catalyses dibenzothiophene 5-oxide + FMNH2 + O2 = dibenzothiophene 5,5-dioxide + FMN + H2O + H(+). Its pathway is sulfur metabolism; dibenzothiophene degradation. Its activity is regulated as follows. Inhibited at high concentrations of FMN or FAD. In terms of biological role, catalyzes the first step of the '4S' desulfurization pathway that removes covalently bound sulfur from dibenzothiophene (DBT) without breaking carbon-carbon bonds. Sulfur dioxygenase which converts DBT to DBT-sulfone (DBTO2 or DBT 5,5-dioxide) probably in a stepwise manner. In addition to FMNH2 can also use FAD (although FAD is less efficient). The chain is Dibenzothiophene monooxygenase from Mycolicibacterium goodii (Mycobacterium goodii).